The chain runs to 621 residues: 1-deoxy-D-xylulose-5-phosphate synthase (621 aa).

Thiamine diphosphate contacts are provided by residues histidine 76 and 117–119; that span reads AHS. Aspartate 148 is a Mg(2+) binding site. Thiamine diphosphate contacts are provided by residues 149 to 150, asparagine 178, tyrosine 285, and glutamate 367; that span reads GA. Mg(2+) is bound at residue asparagine 178.

Belongs to the transketolase family. DXPS subfamily. In terms of assembly, homodimer. It depends on Mg(2+) as a cofactor. The cofactor is thiamine diphosphate.

The catalysed reaction is D-glyceraldehyde 3-phosphate + pyruvate + H(+) = 1-deoxy-D-xylulose 5-phosphate + CO2. It participates in metabolic intermediate biosynthesis; 1-deoxy-D-xylulose 5-phosphate biosynthesis; 1-deoxy-D-xylulose 5-phosphate from D-glyceraldehyde 3-phosphate and pyruvate: step 1/1. In terms of biological role, catalyzes the acyloin condensation reaction between C atoms 2 and 3 of pyruvate and glyceraldehyde 3-phosphate to yield 1-deoxy-D-xylulose-5-phosphate (DXP). The polypeptide is 1-deoxy-D-xylulose-5-phosphate synthase (Aromatoleum aromaticum (strain DSM 19018 / LMG 30748 / EbN1) (Azoarcus sp. (strain EbN1))).